Here is a 104-residue protein sequence, read N- to C-terminus: Ig lambda-2 chain C region (104 aa).

The 94-residue stretch at 6–99 (PTLTVFPPSS…EGDTVEKSLS (94 aa)) folds into the Ig-like domain. Cysteine 27 and cysteine 85 are disulfide-bonded.

In Mus musculus (Mouse), this protein is Ig lambda-2 chain C region (Iglc2).